A 366-amino-acid polypeptide reads, in one-letter code: Histidinol-phosphate aminotransferase (366 aa).

Position 228 is an N6-(pyridoxal phosphate)lysine (Lys-228).

This sequence belongs to the class-II pyridoxal-phosphate-dependent aminotransferase family. Histidinol-phosphate aminotransferase subfamily. In terms of assembly, homodimer. The cofactor is pyridoxal 5'-phosphate.

It carries out the reaction L-histidinol phosphate + 2-oxoglutarate = 3-(imidazol-4-yl)-2-oxopropyl phosphate + L-glutamate. It functions in the pathway amino-acid biosynthesis; L-histidine biosynthesis; L-histidine from 5-phospho-alpha-D-ribose 1-diphosphate: step 7/9. In Corynebacterium diphtheriae (strain ATCC 700971 / NCTC 13129 / Biotype gravis), this protein is Histidinol-phosphate aminotransferase.